The sequence spans 137 residues: Large-conductance mechanosensitive channel (137 aa).

Transmembrane regions (helical) follow at residues 9-29 and 79-99; these read AFAV…GAAF and IQTV…VKAI.

It belongs to the MscL family. Homopentamer.

Its subcellular location is the cell inner membrane. Its function is as follows. Channel that opens in response to stretch forces in the membrane lipid bilayer. May participate in the regulation of osmotic pressure changes within the cell. The protein is Large-conductance mechanosensitive channel of Pseudomonas aeruginosa (strain ATCC 15692 / DSM 22644 / CIP 104116 / JCM 14847 / LMG 12228 / 1C / PRS 101 / PAO1).